We begin with the raw amino-acid sequence, 140 residues long: Nucleoside diphosphate kinase (140 aa).

Lysine 11, phenylalanine 59, arginine 87, threonine 93, arginine 104, and asparagine 114 together coordinate ATP. Histidine 117 (pros-phosphohistidine intermediate) is an active-site residue.

This sequence belongs to the NDK family. As to quaternary structure, homotetramer. Mg(2+) is required as a cofactor.

Its subcellular location is the cytoplasm. The catalysed reaction is a 2'-deoxyribonucleoside 5'-diphosphate + ATP = a 2'-deoxyribonucleoside 5'-triphosphate + ADP. It carries out the reaction a ribonucleoside 5'-diphosphate + ATP = a ribonucleoside 5'-triphosphate + ADP. Its function is as follows. Major role in the synthesis of nucleoside triphosphates other than ATP. The ATP gamma phosphate is transferred to the NDP beta phosphate via a ping-pong mechanism, using a phosphorylated active-site intermediate. In Rickettsia bellii (strain OSU 85-389), this protein is Nucleoside diphosphate kinase.